The following is a 130-amino-acid chain: Anti-adapter protein IraD (130 aa).

It belongs to the GpW/Gp25 family. IraD subfamily. As to quaternary structure, interacts with RssB.

It is found in the cytoplasm. Inhibits RpoS proteolysis by regulating RssB activity, thereby increasing the stability of the sigma stress factor RpoS during oxidative stress. Its effect on RpoS stability is due to its interaction with RssB, which probably blocks the interaction of RssB with RpoS, and the consequent delivery of the RssB-RpoS complex to the ClpXP protein degradation pathway. This Escherichia coli O9:H4 (strain HS) protein is Anti-adapter protein IraD.